The sequence spans 311 residues: tRNA dimethylallyltransferase (311 aa).

Position 12-19 (12-19 (GPTASGKT)) interacts with ATP. 14 to 19 (TASGKT) contributes to the substrate binding site. Interaction with substrate tRNA regions lie at residues 37 to 40 (DSAL), 161 to 165 (QRINR), and 241 to 246 (RCVGYR).

It belongs to the IPP transferase family. In terms of assembly, monomer. Mg(2+) serves as cofactor.

It carries out the reaction adenosine(37) in tRNA + dimethylallyl diphosphate = N(6)-dimethylallyladenosine(37) in tRNA + diphosphate. Functionally, catalyzes the transfer of a dimethylallyl group onto the adenine at position 37 in tRNAs that read codons beginning with uridine, leading to the formation of N6-(dimethylallyl)adenosine (i(6)A). The protein is tRNA dimethylallyltransferase of Histophilus somni (strain 2336) (Haemophilus somnus).